Reading from the N-terminus, the 760-residue chain is Ferric/cupric reductase transmembrane component 1 (760 aa).

The first 18 residues, 1–18 (MKIQQLIVFLFAVVLIDA), serve as a signal peptide directing secretion. The Extracellular segment spans residues 19 to 212 (RTPKRYSELD…NNNFNLSINY (194 aa)). Residues Asn-78, Asn-91, Asn-111, Asn-143, Asn-155, and Asn-207 are each glycosylated (N-linked (GlcNAc...) asparagine). Residues 119-177 (TTKSSSGSKTSASASKSSKSTGSSNASKSSTNAHGSNSSTSSTSSSSSKSGKGNSGTST) form a disordered region. Residues 213-233 (GSGLLGYWAGILAIAIFANMI) form a helical membrane-spanning segment. Topologically, residues 234 to 288 (KKMFPSLTNYLSGSISNLFRKHLFLPATFRKKKAQEFSIGVYGFFDGLIPTRLET) are cytoplasmic. The helical transmembrane segment at 289-309 (IIVVIFVVLTGLFSALHIHHV) threads the bilayer. At 310–324 (KDNPQYATKNAELGH) the chain is on the extracellular side. Residues 325-345 (LIADRTGILGTFLIPLLILFG) form a helical membrane-spanning segment. A Ferric oxidoreductase domain is found at 330–445 (TGILGTFLIP…HIVLVVFFVV (116 aa)). Residues 346-371 (GRNNFLQWLTGWDFATFIMYHRWISR) are Cytoplasmic-facing. Residues His-366 and His-380 each coordinate heme. The chain crosses the membrane as a helical span at residues 372–392 (VDVLLIIVHAITFSVSDKATG). Residues 393-403 (KYNTRMKRDFM) lie on the Extracellular side of the membrane. A helical transmembrane segment spans residues 404 to 424 (IWGTVSTICGGFILFQAMLFF). Residues 425–430 (RRKCYE) lie on the Cytoplasmic side of the membrane. A helical transmembrane segment spans residues 431-451 (VFFLIHIVLVVFFVVGGYYHL). 2 residues coordinate heme: His-436 and His-450. At 452–760 (ESQGYGDFMW…EYHEQLQTWA (309 aa)) the chain is on the extracellular side. One can recognise an FAD-binding FR-type domain in the interval 465–583 (AVWAFDRVVR…EGPYGEPSSA (119 aa)). 575-578 (GPYG) is a binding site for NADP(+). A glycan (N-linked (GlcNAc...) asparagine) is linked at Asn-615. NADP(+) is bound at residue 726 to 727 (CG). The N-linked (GlcNAc...) asparagine glycan is linked to Asn-744.

The protein belongs to the ferric reductase (FRE) family. FAD is required as a cofactor. It depends on heme as a cofactor.

It localises to the cell membrane. The enzyme catalyses 2 a Fe(II)-siderophore + NADP(+) + H(+) = 2 a Fe(III)-siderophore + NADPH. Ferric reductase responsible for reducing extracellular iron and copper prior to import. Catalyzes the reductive uptake of Fe(3+)-salts and Fe(3+) bound to catecholate or hydroxamate siderophores. Fe(3+) is reduced to Fe(2+), which then dissociates from the siderophore and can be imported by the high-affinity Fe(2+) transport complex in the plasma membrane. Also participates in Cu(2+) reduction and Cu(+) uptake. Involved in maintenance of cell wall integrity (CWI), mitochondrial function, and interaction between the pathogen and the host. This is Ferric/cupric reductase transmembrane component 1 from Candida albicans (strain SC5314 / ATCC MYA-2876) (Yeast).